A 263-amino-acid chain; its full sequence is Indole-3-glycerol phosphate synthase (263 aa).

It belongs to the TrpC family.

It catalyses the reaction 1-(2-carboxyphenylamino)-1-deoxy-D-ribulose 5-phosphate + H(+) = (1S,2R)-1-C-(indol-3-yl)glycerol 3-phosphate + CO2 + H2O. The protein operates within amino-acid biosynthesis; L-tryptophan biosynthesis; L-tryptophan from chorismate: step 4/5. The polypeptide is Indole-3-glycerol phosphate synthase (Aliarcobacter butzleri (strain RM4018) (Arcobacter butzleri)).